The following is a 366-amino-acid chain: Sulfate/thiosulfate import ATP-binding protein CysA 2 (366 aa).

The ABC transporter domain occupies 14–243 (LSVHALCRRF…PASRFVAEFV (230 aa)). ATP is bound at residue 46-53 (GPSGCGKT).

The protein belongs to the ABC transporter superfamily. Sulfate/tungstate importer (TC 3.A.1.6) family. As to quaternary structure, the complex is composed of two ATP-binding proteins (CysA), two transmembrane proteins (CysT and CysW) and a solute-binding protein (CysP).

The protein resides in the cell inner membrane. The catalysed reaction is sulfate(out) + ATP + H2O = sulfate(in) + ADP + phosphate + H(+). It carries out the reaction thiosulfate(out) + ATP + H2O = thiosulfate(in) + ADP + phosphate + H(+). Its function is as follows. Part of the ABC transporter complex CysAWTP involved in sulfate/thiosulfate import. Responsible for energy coupling to the transport system. In Chromobacterium violaceum (strain ATCC 12472 / DSM 30191 / JCM 1249 / CCUG 213 / NBRC 12614 / NCIMB 9131 / NCTC 9757 / MK), this protein is Sulfate/thiosulfate import ATP-binding protein CysA 2.